The primary structure comprises 443 residues: MRKFFGTDGIRGKVGAGKMTPELALKLGWAAGRVLSRSGTKKVIIGKDTRISGYLFESAMEAGLSAAGLNVMLMGPMPTPAVAYLTRTFRAEAGVVISASHNPYYDNGIKFFSNDGSKLDDEVELEIERELDKPLTCVESHLLGKVSRIDDAPGRYIEYCKGNFPAEHTLHGLKIVVDCAHGATYHIAPSVFRELGAEVIAIGDKPDGLNINHEVGATSMGKIRETVIGENADLGIALDGDGDRIMMVNRHGKVIDGDEILYILAYDAQSRGVLRGGVVGTLMSNLGLDLALQELDIPFDRSNVGDRYVMTMMKEKGWRIGGENSGHILNLDHGTTGDGIVAGILVLAAMRRRNATLEELTENIKMLPQVLVNVRFEGAHNPLESEQVLAAKSEVEALLGERGRVLLRKSGTEPLIRVMVEGDVEADVIKHANYIADAVRNLV.

The active-site Phosphoserine intermediate is S100. The Mg(2+) site is built by S100, D239, D241, and D243. S100 carries the phosphoserine modification.

The protein belongs to the phosphohexose mutase family. Mg(2+) serves as cofactor. In terms of processing, activated by phosphorylation.

The catalysed reaction is alpha-D-glucosamine 1-phosphate = D-glucosamine 6-phosphate. In terms of biological role, catalyzes the conversion of glucosamine-6-phosphate to glucosamine-1-phosphate. The protein is Phosphoglucosamine mutase of Shewanella sediminis (strain HAW-EB3).